The chain runs to 120 residues: Small ribosomal subunit protein bS6 (120 aa).

The segment covering 97–112 (SNEPSPILKNQSTENT) has biased composition (polar residues). The interval 97–120 (SNEPSPILKNQSTENTPVIDVTAN) is disordered.

The protein belongs to the bacterial ribosomal protein bS6 family.

Functionally, binds together with bS18 to 16S ribosomal RNA. This is Small ribosomal subunit protein bS6 from Rickettsia bellii (strain RML369-C).